Reading from the N-terminus, the 49-residue chain is Large ribosomal subunit protein bL33 (49 aa).

It belongs to the bacterial ribosomal protein bL33 family.

The polypeptide is Large ribosomal subunit protein bL33 (Lacticaseibacillus casei (strain BL23) (Lactobacillus casei)).